Reading from the N-terminus, the 313-residue chain is tRNA dimethylallyltransferase (313 aa).

17–24 (GPTASGKT) lines the ATP pocket. 19–24 (TASGKT) serves as a coordination point for substrate. Interaction with substrate tRNA regions lie at residues 42–45 (DSAL), 166–170 (QRLSR), 247–252 (RCVGYR), and 280–287 (KRQITWLR).

This sequence belongs to the IPP transferase family. As to quaternary structure, monomer. Requires Mg(2+) as cofactor.

It carries out the reaction adenosine(37) in tRNA + dimethylallyl diphosphate = N(6)-dimethylallyladenosine(37) in tRNA + diphosphate. In terms of biological role, catalyzes the transfer of a dimethylallyl group onto the adenine at position 37 in tRNAs that read codons beginning with uridine, leading to the formation of N6-(dimethylallyl)adenosine (i(6)A). The chain is tRNA dimethylallyltransferase from Photorhabdus laumondii subsp. laumondii (strain DSM 15139 / CIP 105565 / TT01) (Photorhabdus luminescens subsp. laumondii).